Consider the following 154-residue polypeptide: MKTFSAKPAEVTKKWVVIDATGLVVGRLATLVAMRLRGKHLPTYTPHVDCGDNIIIINAAKVVLTGRKRDNKVYYHHTGFIGGIKERTAKSILEGRFPERVVEKAVERMIPRGPLGRVQMGNLRVYPGAEHPHEAQQPETLDVGAMNRKNKRAA.

A disordered region spans residues 132 to 154 (PHEAQQPETLDVGAMNRKNKRAA).

The protein belongs to the universal ribosomal protein uL13 family. Part of the 50S ribosomal subunit.

In terms of biological role, this protein is one of the early assembly proteins of the 50S ribosomal subunit, although it is not seen to bind rRNA by itself. It is important during the early stages of 50S assembly. This is Large ribosomal subunit protein uL13 from Rhodopseudomonas palustris (strain HaA2).